The chain runs to 332 residues: Ferredoxin--NADP reductase (332 aa).

Residues Asp33, Gln41, Tyr46, Ala86, Met121, Asp282, and Ser325 each contribute to the FAD site.

It belongs to the ferredoxin--NADP reductase type 2 family. Homodimer. FAD serves as cofactor.

The enzyme catalyses 2 reduced [2Fe-2S]-[ferredoxin] + NADP(+) + H(+) = 2 oxidized [2Fe-2S]-[ferredoxin] + NADPH. The chain is Ferredoxin--NADP reductase from Sulfurisphaera tokodaii (strain DSM 16993 / JCM 10545 / NBRC 100140 / 7) (Sulfolobus tokodaii).